Consider the following 444-residue polypeptide: Type VI secretion system baseplate component TssK1 (444 aa).

Forms transient higher-order structures that correlated with dynamics of sheath component TssB1. Interacts with TssA1.

Its function is as follows. Core component of the H1 type VI (H1-T6SS) secretion system that plays a role in the release of toxins targeting both eukaryotic and prokaryotic species. Functions as a spatio-temporal marker for assembly of contractile apparatus made of TssB1 and TssC1. This role in assembly depends on TssM1. The polypeptide is Type VI secretion system baseplate component TssK1 (Pseudomonas aeruginosa (strain ATCC 15692 / DSM 22644 / CIP 104116 / JCM 14847 / LMG 12228 / 1C / PRS 101 / PAO1)).